The sequence spans 330 residues: Small ribosomal subunit protein uS15m (330 aa).

This sequence belongs to the universal ribosomal protein uS15 family. As to quaternary structure, component of the mitochondrial ribosome small subunit (28S) which comprises a 12S rRNA and about 30 distinct proteins.

It localises to the mitochondrion. The polypeptide is Small ribosomal subunit protein uS15m (mrps-15) (Caenorhabditis elegans).